We begin with the raw amino-acid sequence, 151 residues long: 3-dehydroquinate dehydratase (151 aa).

Tyr-24 (proton acceptor) is an active-site residue. Residues Asn-76, His-82, and Asp-89 each contribute to the substrate site. His-102 serves as the catalytic Proton donor. Residues Leu-103–Ser-104 and Arg-113 contribute to the substrate site.

It belongs to the type-II 3-dehydroquinase family. Homododecamer.

It carries out the reaction 3-dehydroquinate = 3-dehydroshikimate + H2O. The protein operates within metabolic intermediate biosynthesis; chorismate biosynthesis; chorismate from D-erythrose 4-phosphate and phosphoenolpyruvate: step 3/7. Functionally, catalyzes a trans-dehydration via an enolate intermediate. The chain is 3-dehydroquinate dehydratase from Acinetobacter baumannii (strain AB307-0294).